A 363-amino-acid polypeptide reads, in one-letter code: MHFLRRPISLRQRLILTIGAILLVFELISVFWLWHESTEQIQLFEQALRDNRNNDRHIMREIREAVASLIVPGVFMVSLTLFICYQAVRRITRPLAELQKELEARTADNLTPIAIHSATLEIEAVVSALNDLVSRLTSTLDNERLFTADVAHELRTPLAGVRLHLELLAKTHHIDVAPLVARLDQMMESVSQLLQLARAGQSFSSGNYQHVKLLEDVILPSYDELSTMLDQRQQTLLLPESAADITVQGDATLLRMLLRNLVENAHRYSPQGSNIMIKLQEDDGAVMAVEDEGPGIDESKCGELSKAFVRMDSRYGGIGLGLSIVSRITQLHHGQFFLQNRQETSGTRAWVRLKKDQYVANQI.

Topologically, residues 1–13 are cytoplasmic; the sequence is MHFLRRPISLRQR. Residues 14-34 form a helical membrane-spanning segment; sequence LILTIGAILLVFELISVFWLW. The Periplasmic segment spans residues 35–64; that stretch reads HESTEQIQLFEQALRDNRNNDRHIMREIRE. Residues 65–88 traverse the membrane as a helical segment; that stretch reads AVASLIVPGVFMVSLTLFICYQAV. The HAMP domain occupies 89 to 141; the sequence is RRITRPLAELQKELEARTADNLTPIAIHSATLEIEAVVSALNDLVSRLTSTLD. Residues 89 to 363 lie on the Cytoplasmic side of the membrane; that stretch reads RRITRPLAEL…KKDQYVANQI (275 aa). The Histidine kinase domain maps to 149–357; the sequence is DVAHELRTPL…RAWVRLKKDQ (209 aa). At His152 the chain carries Phosphohistidine; by autocatalysis.

Autophosphorylated.

It localises to the cell inner membrane. It catalyses the reaction ATP + protein L-histidine = ADP + protein N-phospho-L-histidine.. Its function is as follows. Member of the two-component regulatory system BasS/BasR Autophosphorylates and activates BasR by phosphorylation. This Escherichia coli (strain K12) protein is Sensor protein BasS (basS).